The primary structure comprises 423 residues: Protein MANNAN SYNTHESIS-RELATED 2 (423 aa).

At Met-1 to Arg-6 the chain is on the cytoplasmic side. Residues Gln-7–His-26 form a helical; Signal-anchor for type II membrane protein membrane-spanning segment. The Lumenal segment spans residues Arg-27 to Cys-423. Position 264–266 (Asp-264–Arg-266) interacts with substrate.

It belongs to the glycosyltransferase GT106 family. As to expression, widely expressed.

Its subcellular location is the golgi apparatus membrane. The protein operates within glycan biosynthesis. Functionally, glycosyltransferase involved in mannan biosynthesis. This chain is Protein MANNAN SYNTHESIS-RELATED 2, found in Arabidopsis thaliana (Mouse-ear cress).